The following is a 996-amino-acid chain: UPF0182 protein CE0802 (996 aa).

A run of 7 helical transmembrane segments spans residues 19–39 (VTWIIGIIALLVLVTPLTVGF), 63–83 (IILFIVFALLAGFVTWLAGYF), 115–135 (ILIIVPIFVGLLGGLVGQRSW), 176–196 (STLLVVAFIIALVGHYLLGGI), 212–234 (GARAQLAVTAGLWMLVRVATYWL), 262–282 (KIILMVISIIVAVAFFSAIFL), and 290–310 (LAVVLLVLSSVVVGAVWPLML). The disordered stretch occupies residues 920–950 (VPDVNATEDADATTDGEDETPAAPAAPAGSE). A compositionally biased stretch (acidic residues) spans 925-939 (ATEDADATTDGEDET). Low complexity predominate over residues 940–950 (PAAPAAPAGSE).

It belongs to the UPF0182 family.

The protein resides in the cell membrane. This is UPF0182 protein CE0802 from Corynebacterium efficiens (strain DSM 44549 / YS-314 / AJ 12310 / JCM 11189 / NBRC 100395).